Reading from the N-terminus, the 109-residue chain is Ribulose bisphosphate carboxylase small subunit (109 aa).

Belongs to the RuBisCO small chain family. Heterohexadecamer of 8 large and 8 small subunits. Forms complexes of many stoichiometries with Raf1 and RbcL.

Its subcellular location is the carboxysome. In terms of biological role, ruBisCO catalyzes two reactions: the carboxylation of D-ribulose 1,5-bisphosphate, the primary event in carbon dioxide fixation, as well as the oxidative fragmentation of the pentose substrate in the photorespiration process. Both reactions occur simultaneously and in competition at the same active site. Although the small subunit is not catalytic it is essential for maximal activity. The sequence is that of Ribulose bisphosphate carboxylase small subunit from Nostoc sp. (strain PCC 7120 / SAG 25.82 / UTEX 2576).